We begin with the raw amino-acid sequence, 443 residues long: ATP-dependent protease ATPase subunit HslU (443 aa).

Residues Ile18, 60–65 (GVGKTE), Asp256, Glu321, and Arg393 each bind ATP.

Belongs to the ClpX chaperone family. HslU subfamily. A double ring-shaped homohexamer of HslV is capped on each side by a ring-shaped HslU homohexamer. The assembly of the HslU/HslV complex is dependent on binding of ATP.

The protein localises to the cytoplasm. In terms of biological role, ATPase subunit of a proteasome-like degradation complex; this subunit has chaperone activity. The binding of ATP and its subsequent hydrolysis by HslU are essential for unfolding of protein substrates subsequently hydrolyzed by HslV. HslU recognizes the N-terminal part of its protein substrates and unfolds these before they are guided to HslV for hydrolysis. This chain is ATP-dependent protease ATPase subunit HslU, found in Vibrio cholerae serotype O1 (strain ATCC 39315 / El Tor Inaba N16961).